The primary structure comprises 429 residues: Adenylosuccinate synthetase (429 aa).

GTP is bound by residues glycine 12 to lysine 18 and glycine 40 to threonine 42. Residue aspartate 13 is the Proton acceptor of the active site. The Mg(2+) site is built by aspartate 13 and glycine 40. IMP-binding positions include aspartate 13–lysine 16, asparagine 38–histidine 41, threonine 129, arginine 143, glutamine 223, threonine 238, and arginine 302. Histidine 41 acts as the Proton donor in catalysis. Residue valine 298 to arginine 304 participates in substrate binding. Residues arginine 304, lysine 330–aspartate 332, and serine 412–serine 414 contribute to the GTP site.

The protein belongs to the adenylosuccinate synthetase family. As to quaternary structure, homodimer. It depends on Mg(2+) as a cofactor.

The protein localises to the cytoplasm. The catalysed reaction is IMP + L-aspartate + GTP = N(6)-(1,2-dicarboxyethyl)-AMP + GDP + phosphate + 2 H(+). It functions in the pathway purine metabolism; AMP biosynthesis via de novo pathway; AMP from IMP: step 1/2. Plays an important role in the de novo pathway of purine nucleotide biosynthesis. Catalyzes the first committed step in the biosynthesis of AMP from IMP. The chain is Adenylosuccinate synthetase from Bartonella bacilliformis (strain ATCC 35685 / KC583 / Herrer 020/F12,63).